A 174-amino-acid polypeptide reads, in one-letter code: Ribosome rescue factor SmrB (174 aa).

The Smr domain maps to 96–171 (LDLHGLTQQQ…GDAAILVLIE (76 aa)).

It belongs to the SmrB family. As to quaternary structure, associates with collided ribosomes, but not with correctly translating polysomes.

Its function is as follows. Acts as a ribosome collision sensor. Detects stalled/collided disomes (pairs of ribosomes where the leading ribosome is stalled and a second ribosome has collided with it) and endonucleolytically cleaves mRNA at the 5' boundary of the stalled ribosome. Stalled/collided disomes form a new interface (primarily via the 30S subunits) that binds SmrB. Cleaved mRNA becomes available for tmRNA ligation, leading to ribosomal subunit dissociation and rescue of stalled ribosomes. This Tolumonas auensis (strain DSM 9187 / NBRC 110442 / TA 4) protein is Ribosome rescue factor SmrB.